A 372-amino-acid polypeptide reads, in one-letter code: Ephrin type-A receptor 8 (372 aa).

Residues 2-263 (IHIEKIIGSG…HVVSVLEALV (262 aa)) enclose the Protein kinase domain. ATP contacts are provided by residues 8–16 (IGSGESGEV) and Lys-34. The active-site Proton acceptor is Asp-127. Tyr-206 carries the post-translational modification Phosphotyrosine; by autocatalysis. An SAM domain is found at 297 to 372 (NGDLTVGDWL…SCTQGPRRHL (76 aa)). The PDZ-binding motif lies at 370–372 (RHL).

In terms of assembly, heterotetramer upon binding of the ligand. The heterotetramer is composed of an ephrin dimer and a receptor dimer. Oligomerization is probably required to induce biological responses. May also form heterodimers with other ephrin receptors. Interacts with FYN; possible downstream effector of EPHA8 in regulation of cell adhesion. Interacts with PIK3CG; regulates integrin-mediated cell adhesion to substrate. Interacts with TIAM1; regulates clathrin-mediated endocytosis of EPHA8. Interacts with ANKS1A and ANKS1B; EPHA8 kinase activity-independent but stimulated by EPHA8 ubiquitination. In terms of processing, phosphorylated. Phosphorylation is stimulated upon binding of its ligands including EFNA2, EFNA3 and EFNA5. Autophosphorylation on Tyr-206 modulates tyrosine kinase activity. Post-translationally, ubiquitinated. Ubiquitination by CBL regulates the receptor stability and activity through proteasomal degradation. ANKS1A prevents ubiquitination and degradation. As to expression, most abundant in brain.

It localises to the cell membrane. The protein localises to the cell projection. The protein resides in the early endosome membrane. It carries out the reaction L-tyrosyl-[protein] + ATP = O-phospho-L-tyrosyl-[protein] + ADP + H(+). Functionally, receptor tyrosine kinase which binds promiscuously GPI-anchored ephrin-A family ligands residing on adjacent cells, leading to contact-dependent bidirectional signaling into neighboring cells. The signaling pathway downstream of the receptor is referred to as forward signaling while the signaling pathway downstream of the ephrin ligand is referred to as reverse signaling. The GPI-anchored ephrin-A EFNA2, EFNA3, and EFNA5 are able to activate EPHA8 through phosphorylation. With EFNA5 may regulate integrin-mediated cell adhesion and migration on fibronectin substrate but also neurite outgrowth. During development of the nervous system also plays a role in axon guidance. Downstream effectors of the EPHA8 signaling pathway include FYN which promotes cell adhesion upon activation by EPHA8 and the MAP kinases in the stimulation of neurite outgrowth. This chain is Ephrin type-A receptor 8 (Epha8), found in Rattus norvegicus (Rat).